Consider the following 656-residue polypeptide: Chaperone protein HtpG (656 aa).

The segment at 1-359 is a; substrate-binding; that stretch reads MSAQVEQLEF…AEDMSLNVSR (359 aa). The tract at residues 360-575 is b; it reads EILQQNRQIN…AFGITPALAR (216 aa). Residues 576–656 are c; sequence IYRASGQDVP…LLADLLSRSM (81 aa).

The protein belongs to the heat shock protein 90 family. Homodimer.

It localises to the cytoplasm. Its function is as follows. Molecular chaperone. Has ATPase activity. This chain is Chaperone protein HtpG, found in Mycobacterium leprae (strain TN).